The chain runs to 423 residues: Glucose-1-phosphate adenylyltransferase (423 aa).

Alpha-D-glucose 1-phosphate is bound by residues Y110, G175, 190-191 (EK), and S208.

This sequence belongs to the bacterial/plant glucose-1-phosphate adenylyltransferase family. As to quaternary structure, homotetramer.

The enzyme catalyses alpha-D-glucose 1-phosphate + ATP + H(+) = ADP-alpha-D-glucose + diphosphate. It functions in the pathway glycan biosynthesis; glycogen biosynthesis. Involved in the biosynthesis of ADP-glucose, a building block required for the elongation reactions to produce glycogen. Catalyzes the reaction between ATP and alpha-D-glucose 1-phosphate (G1P) to produce pyrophosphate and ADP-Glc. This Nitrosococcus oceani (strain ATCC 19707 / BCRC 17464 / JCM 30415 / NCIMB 11848 / C-107) protein is Glucose-1-phosphate adenylyltransferase.